A 274-amino-acid polypeptide reads, in one-letter code: uncharacterized protein (274 aa).

Basic and acidic residues predominate over residues 1–15 (MEESKTKRKEDRIDL). Positions 1–40 (MEESKTKRKEDRIDLKNTPPQKKSKRDSTNDETARTSLRS) are disordered. A G-patch domain is found at 41 to 87 (IMPRGYKMMENMGYKEGETLGSNESALKEPIKVEINTKRRGIRAEKP).

The protein localises to the cytoplasm. It localises to the nucleus. This is an uncharacterized protein from Saccharomyces cerevisiae (strain ATCC 204508 / S288c) (Baker's yeast).